The following is a 206-amino-acid chain: Large ribosomal subunit protein uL3 (206 aa).

A disordered region spans residues 127-151 (SGGPSSHGSKFHRHLGGTGQATTPA).

This sequence belongs to the universal ribosomal protein uL3 family. In terms of assembly, part of the 50S ribosomal subunit. Forms a cluster with proteins L14 and L19.

One of the primary rRNA binding proteins, it binds directly near the 3'-end of the 23S rRNA, where it nucleates assembly of the 50S subunit. This chain is Large ribosomal subunit protein uL3, found in Borreliella burgdorferi (strain ATCC 35210 / DSM 4680 / CIP 102532 / B31) (Borrelia burgdorferi).